The chain runs to 192 residues: Pyridoxal 5'-phosphate synthase subunit PdxT (192 aa).

Position 47 to 49 (G47 to S49) interacts with L-glutamine. The Nucleophile role is filled by C78. Residues R105 and I139 to R140 each bind L-glutamine. Residues H175 and E177 each act as charge relay system in the active site.

Belongs to the glutaminase PdxT/SNO family. In terms of assembly, in the presence of PdxS, forms a dodecamer of heterodimers. Only shows activity in the heterodimer.

The catalysed reaction is aldehydo-D-ribose 5-phosphate + D-glyceraldehyde 3-phosphate + L-glutamine = pyridoxal 5'-phosphate + L-glutamate + phosphate + 3 H2O + H(+). It catalyses the reaction L-glutamine + H2O = L-glutamate + NH4(+). It functions in the pathway cofactor biosynthesis; pyridoxal 5'-phosphate biosynthesis. In terms of biological role, catalyzes the hydrolysis of glutamine to glutamate and ammonia as part of the biosynthesis of pyridoxal 5'-phosphate. The resulting ammonia molecule is channeled to the active site of PdxS. This Solibacter usitatus (strain Ellin6076) protein is Pyridoxal 5'-phosphate synthase subunit PdxT.